The chain runs to 219 residues: Small ribosomal subunit protein uS5 (219 aa).

A disordered region spans residues 1 to 32; sequence MSHPQSRPGGRDGRPRRRREPREEAPWVPKTA. The S5 DRBM domain occupies 68–131; that stretch reads LKTEVVDVGI…NQALLNVGPI (64 aa).

It belongs to the universal ribosomal protein uS5 family. As to quaternary structure, part of the 30S ribosomal subunit. Contacts protein S4.

Its function is as follows. With S4 and S12 plays an important role in translational accuracy. This Cenarchaeum symbiosum (strain A) protein is Small ribosomal subunit protein uS5 (rps5).